We begin with the raw amino-acid sequence, 263 residues long: Large ribosomal subunit protein uL29m (263 aa).

Disordered regions lie at residues 51–92 (ARVT…EELP) and 208–263 (PEID…APRV). Over residues 53-66 (VTRDNSKQRGESAL) the composition is skewed to basic and acidic residues. Residues 214 to 223 (NPENPYTPST) are compositionally biased toward polar residues. Residues 233-245 (GAEASETQSTTTE) show a composition bias toward low complexity. The segment covering 246-257 (IDPTTIPSSKSQ) has biased composition (polar residues).

The protein belongs to the universal ribosomal protein uL29 family. As to quaternary structure, component of the mitochondrial large ribosomal subunit (mt-LSU). Mature N.crassa 74S mitochondrial ribosomes consist of a small (37S) and a large (54S) subunit. The 37S small subunit contains a 16S ribosomal RNA (16S mt-rRNA) and 32 different proteins. The 54S large subunit contains a 23S rRNA (23S mt-rRNA) and 42 different proteins.

The protein resides in the mitochondrion. Its function is as follows. Component of the mitochondrial ribosome (mitoribosome), a dedicated translation machinery responsible for the synthesis of mitochondrial genome-encoded proteins, including at least some of the essential transmembrane subunits of the mitochondrial respiratory chain. The mitoribosomes are attached to the mitochondrial inner membrane and translation products are cotranslationally integrated into the membrane. The chain is Large ribosomal subunit protein uL29m (mrpl4) from Neurospora crassa (strain ATCC 24698 / 74-OR23-1A / CBS 708.71 / DSM 1257 / FGSC 987).